The chain runs to 535 residues: MLSLLNPKAESIQRAQALQVNISAAIGLQDVLKSNLGPTGTTKMLVDGAGAIKLTKDGKVLLTEMQIQNPTASCIAKAATAQDDATGDGTTSVCLLVGELLKQAELYIREGLHPSLISDGFNLAKNEALTFLDSFKTDFEVDREVLLNVAKTSLSTKISSKVVESLAPAVVDAILTIRRPDEPIDLHMVEIMKMQNRSASDTQLIRGLLLDHGARHPDMPKQVKNAYILILNVSLEYEKSEINSGFFYSTSEQRERLVESERKFVDNKLRKIVELKKEVCERDPTANFVIINQKGIDPLSLDVLAKNGIMALRRAKRRNMERLQLACGGVAQNSVDDLNPEVLGWAGSVYERTLGEEKYTFVEDVKDPKSATILIHGPNTYTIQQIQDATRDGLRAVKNAVEDNCLIVGAGAFEVACAAHLRNKFAAKEVKGKAKMGVYAYADALLIIPKTLAANSSYDTQDAIVALQEEASEGYKVGLDLKTGMPFDPEVEGIYDNYRVIRHMLHSATVIASNLISVDQILRAGRSSLKEGPPQ.

This sequence belongs to the TCP-1 chaperonin family. Heterooligomeric complex of about 850 to 900 kDa that forms two stacked rings, 12 to 16 nm in diameter.

The protein resides in the cytoplasm. Molecular chaperone; assists the folding of proteins upon ATP hydrolysis. Known to play a role, in vitro, in the folding of actin and tubulin. The protein is T-complex protein 1 subunit zeta (cct6) of Schizosaccharomyces pombe (strain 972 / ATCC 24843) (Fission yeast).